Reading from the N-terminus, the 516-residue chain is Multicopper oxidase CueO (516 aa).

A signal peptide (tat-type signal) is located at residues 1–28; the sequence is MQRRDFLKYSVALGVASALPLWSRAVFA. Plastocyanin-like domains are found at residues 55–165 and 227–292; these read GQST…IEDD and PRGW…DNKP. 4 residues coordinate Cu cation: H101, H103, H141, and H143. Residues 355 to 400 are methionine-rich region; that stretch reads MDPMLDMMGMQMLMEKYGDQAMAGMDHSQMMGHMGHGNMNHMNHGG. The region spanning 402–516 is the Plastocyanin-like 3 domain; that stretch reads FDFHHANKIN…DTGMMLGFTV (115 aa). Residues H443, H446, H448, H499, C500, H501, and H505 each coordinate Cu cation.

Belongs to the multicopper oxidase family. In terms of assembly, monomer. Cu cation serves as cofactor. Exported by the Tat system. The position of the signal peptide cleavage has been experimentally proven.

Its subcellular location is the periplasm. It carries out the reaction 4 Cu(+) + O2 + 4 H(+) = 4 Cu(2+) + 2 H2O. With respect to regulation, ferroxidase and phenoloxidase activities are enhanced considerably in the presence of excess copper ions. A labile regulatory copper ion near the T1 copper site is important for the copper associated activation of enzyme activity. Ag(+) acts as a potent inhibitor of oxidase activity by binding at Cu(+) binding sites, blocking Cu(+) substrate binding and oxidation. pPD oxidase activity is strongly inhibited by sodium azide, an inhibitor of the electron transfer. In terms of biological role, multicopper oxidase involved in copper homeostasis and copper tolerance under aerobic conditions. Is responsible for the oxidation of Cu(+) to the less harmful Cu(2+) in the periplasm, thereby preventing Cu(+) from entering the cytoplasm. Probably primarily functions as a cuprous oxidase in vivo. Its function is as follows. In vitro, in the presence of excess copper ions, exhibits ferroxidase and phenoloxidase activities. Fe(2+) is an excellent substrate in the presence of excess Cu(2+), but is inactive in the absence of Cu(2+). Oxidizes the phenolate iron siderophores enterobactin, 2,3-dihydroxybenzoate (2,3-DHB) and 3-hydroxyanthranilate (3-HAA). Oxidation and thus inactivation of enterobactin could protect cells from the interaction of enterobactin with copper and play a central role as an interface between copper detoxification and iron homeostasis. Also oxidizes a variety of phenolic model substrates, including 2,2'-azinobis(3-ethylbenzthiazolinesulfonic acid) (ABTS), p-phenylenediamine (pPD), 2,6-dimethoxyphenol (2,6-DMP) and 3,4-dihydroxybenzoic acid (3,4-DHB). This is Multicopper oxidase CueO from Escherichia coli (strain K12).